A 610-amino-acid polypeptide reads, in one-letter code: Glutamine--fructose-6-phosphate aminotransferase [isomerizing] (610 aa).

Catalysis depends on cysteine 2, which acts as the Nucleophile; for GATase activity. The region spanning 2 to 218 is the Glutamine amidotransferase type-2 domain; sequence CGIVGAVAQR…EGDVAEITRR (217 aa). SIS domains are found at residues 286–426 and 459–600; these read AAEI…QQGR and LATD…VDQP. Lysine 605 (for Fru-6P isomerization activity) is an active-site residue.

In terms of assembly, homodimer.

It is found in the cytoplasm. It carries out the reaction D-fructose 6-phosphate + L-glutamine = D-glucosamine 6-phosphate + L-glutamate. In terms of biological role, catalyzes the first step in hexosamine metabolism, converting fructose-6P into glucosamine-6P using glutamine as a nitrogen source. This Vibrio vulnificus (strain CMCP6) protein is Glutamine--fructose-6-phosphate aminotransferase [isomerizing].